We begin with the raw amino-acid sequence, 126 residues long: uncharacterized protein (126 aa).

The residue at position 68 (threonine 68) is a Phosphothreonine.

This is an uncharacterized protein from Pseudomonas aeruginosa (strain UCBPP-PA14).